Here is a 346-residue protein sequence, read N- to C-terminus: Protein RecA (346 aa).

Position 68–75 (68–75 (GPESSGKT)) interacts with ATP.

Belongs to the RecA family.

It is found in the cytoplasm. Its function is as follows. Can catalyze the hydrolysis of ATP in the presence of single-stranded DNA, the ATP-dependent uptake of single-stranded DNA by duplex DNA, and the ATP-dependent hybridization of homologous single-stranded DNAs. It interacts with LexA causing its activation and leading to its autocatalytic cleavage. The polypeptide is Protein RecA (Heliobacterium modesticaldum (strain ATCC 51547 / Ice1)).